The sequence spans 537 residues: CTP synthase (537 aa).

The segment at methionine 1 to isoleucine 265 is amidoligase domain. Serine 13 contributes to the CTP binding site. Serine 13 is a UTP binding site. ATP contacts are provided by residues serine 14–leucine 19 and aspartate 71. Positions 71 and 139 each coordinate Mg(2+). CTP contacts are provided by residues aspartate 146–glutamate 148 and lysine 222. A UTP-binding site is contributed by lysine 222. Residues arginine 290–cysteine 536 form the Glutamine amidotransferase type-1 domain. Residue glycine 352 coordinates L-glutamine. Cysteine 379 acts as the Nucleophile; for glutamine hydrolysis in catalysis. L-glutamine-binding positions include phenylalanine 380–glutamine 383, glutamate 403, and arginine 464. Catalysis depends on residues histidine 509 and glutamate 511.

Belongs to the CTP synthase family. As to quaternary structure, homotetramer.

It carries out the reaction UTP + L-glutamine + ATP + H2O = CTP + L-glutamate + ADP + phosphate + 2 H(+). The catalysed reaction is L-glutamine + H2O = L-glutamate + NH4(+). It catalyses the reaction UTP + NH4(+) + ATP = CTP + ADP + phosphate + 2 H(+). It functions in the pathway pyrimidine metabolism; CTP biosynthesis via de novo pathway; CTP from UDP: step 2/2. Allosterically activated by GTP, when glutamine is the substrate; GTP has no effect on the reaction when ammonia is the substrate. The allosteric effector GTP functions by stabilizing the protein conformation that binds the tetrahedral intermediate(s) formed during glutamine hydrolysis. Inhibited by the product CTP, via allosteric rather than competitive inhibition. In terms of biological role, catalyzes the ATP-dependent amination of UTP to CTP with either L-glutamine or ammonia as the source of nitrogen. Regulates intracellular CTP levels through interactions with the four ribonucleotide triphosphates. The chain is CTP synthase from Rickettsia peacockii (strain Rustic).